A 229-amino-acid chain; its full sequence is Orotidine 5'-phosphate decarboxylase (229 aa).

Substrate-binding positions include Asp-12, Lys-34, 61–70, Thr-116, Arg-177, Gln-186, Gly-206, and Arg-207; that span reads DWKLHDIGAT. Lys-63 serves as the catalytic Proton donor.

It belongs to the OMP decarboxylase family. Type 1 subfamily. Homodimer.

It carries out the reaction orotidine 5'-phosphate + H(+) = UMP + CO2. The protein operates within pyrimidine metabolism; UMP biosynthesis via de novo pathway; UMP from orotate: step 2/2. Catalyzes the decarboxylation of orotidine 5'-monophosphate (OMP) to uridine 5'-monophosphate (UMP). This chain is Orotidine 5'-phosphate decarboxylase, found in Caulobacter sp. (strain K31).